The sequence spans 177 residues: Thymidine kinase (177 aa).

ATP is bound at residue 11–18; the sequence is GPMFSGKS. The Proton acceptor role is filled by glutamate 83. Phenylalanine 113 is a binding site for substrate. 2 residues coordinate Zn(2+): cysteine 138 and cysteine 141. 157-161 contacts substrate; the sequence is IEIIG. Zn(2+)-binding residues include cysteine 170 and cysteine 173.

This sequence belongs to the thymidine kinase family. In terms of assembly, homotetramer. Two molecules of substrate bind to each enzyme tetramer.

It catalyses the reaction thymidine + ATP = dTMP + ADP + H(+). Phosphorylates thymidine and thymidine analogs, such as azidothymidine (AZT). Part of the salvage pathway for pyrimidine deoxyribonucleotide synthesis. The protein is Thymidine kinase (OPG101) of Procyon lotor (Raccoon).